The chain runs to 589 residues: C-type lectin domain family 4 member F (589 aa).

Residues 1 to 39 (MDGEAVRFCTDNQCVSLHPQEVDSVAMAPAAPKIPRLVQ) lie on the Cytoplasmic side of the membrane. The helical; Signal-anchor for type II membrane protein transmembrane segment at 40-60 (ATPAFMAVTLVFSLVTLFVVV) threads the bilayer. Residues 61-589 (QQQTRPVPKP…TPPCPWILSN (529 aa)) lie on the Extracellular side of the membrane. 8 N-linked (GlcNAc...) asparagine glycosylation sites follow: Asn79, Asn113, Asn207, Asn230, Asn244, Asn312, Asn385, and Asn399. The 114-residue stretch at 476–589 (NGGSLYYFSS…TPPCPWILSN (114 aa)) folds into the C-type lectin domain.

It localises to the membrane. Functionally, receptor with an affinity for galactose and fucose. Could be involved in endocytosis. The sequence is that of C-type lectin domain family 4 member F (CLEC4F) from Homo sapiens (Human).